We begin with the raw amino-acid sequence, 554 residues long: MFCIQCEQTIRTPAGNGCSYAQGMCGKLAATSDLQDLLIYMLQGVSVYATKARELGVVDPEVDTFVPKAFFSTLTNVNFDDERIIAYAKQAAEYRESLKNAYEAACEAAGKSAESLPPVAQFVLGTSKPEMLSQAPVALLNKDKNDIHEDILGLRLLCLYGLKGAAAYMEHARVLGKTDAEIAGRFHEIMAFLGEPSVDADKLFITAMDIGQLNYRIMAMLDAGETEAFGHPEPTVVNTKAVKGKAILVSGHDMKDLELILEQTAGKGINVYTHGEMLPALAYPAFKKYAHLVGNYGSAWQNQQKEFANFPGAVVMTSNCIIDPNVGQYSDRIFTRSIVGWPGVTHVVGDDFSVVIDKALALDGFQYDEIPHNITIGFARNALMAAAPTVVENVKNGSIKHFFLVGGCDGDKSERSYFTDLAKSAPKDSVILTLGCGKYKFNKLEFGDINGIPRLLDIGQCNDAYSAIQLAIALSQIFECDINELPLNLVLSWFEQKAIVVLLTLLSLGVKNIRTGPTPPAFLTANLAKILEEKFGLRNTTTVEADLKTMLNVA.

[2Fe-2S] cluster contacts are provided by C3, C6, C18, and C25. Hybrid [4Fe-2O-2S] cluster is bound by residues H252, E276, C320, C408, C436, C461, E495, and K497. A Cysteine persulfide modification is found at C408.

It belongs to the HCP family. Requires [2Fe-2S] cluster as cofactor. It depends on hybrid [4Fe-2O-2S] cluster as a cofactor.

Its subcellular location is the cytoplasm. It carries out the reaction A + NH4(+) + H2O = hydroxylamine + AH2 + H(+). Catalyzes the reduction of hydroxylamine to form NH(3) and H(2)O. The polypeptide is Hydroxylamine reductase (Shewanella sp. (strain MR-4)).